The chain runs to 1407 residues: Enhancer of mRNA-decapping protein 4 (1407 aa).

Residue Ala2 is modified to N-acetylalanine. Phosphoserine occurs at positions 3 and 6. An N6-acetyllysine modification is found at Lys125. 4 WD repeats span residues 174–214 (GFTG…GKIQ), 230–277 (NHFR…SSHS), 295–334 (GHST…QDEP), and 342–393 (PHDG…CLQT). The tract at residues 547 to 566 (GESRPELGSEGLASAPHGSQ) is disordered. Ser560, Ser565, Ser583, and Ser585 each carry phosphoserine. Disordered stretches follow at residues 604–632 (SLQQ…SSSS) and 673–745 (SSSS…STAL). Composition is skewed to low complexity over residues 609–632 (SASP…SSSS) and 673–693 (SSSS…LPGP). Phosphoserine occurs at positions 681, 713, 728, and 730. Positions 727 to 745 (ASPSRTRSPDVISSASTAL) are enriched in polar residues. Thr732 carries the post-translational modification Phosphothreonine. 2 positions are modified to phosphoserine: Ser734 and Ser746. The interval 787-817 (PRPRQGPELSSQLGLDGGPGDGDRHSTPSLL) is disordered. Thr827 is modified (phosphothreonine). 2 positions are modified to phosphoserine: Ser850 and Ser877. Positions 875–951 (HDSQDTSAEQ…SRLTEHQVVE (77 aa)) are disordered. Thr880 bears the Phosphothreonine mark. A phosphoserine mark is found at Ser881, Ser885, Ser893, Ser896, and Ser898. Thr907 is subject to Phosphothreonine. A coiled-coil region spans residues 972–1031 (HNQEELLQRLCAQLEGLQSTVTDHVERALETRHEQEQRRLERALAEGQQRGGQLQEQLTQ). The residue at position 1386 (Ser1386) is a Phosphoserine.

It belongs to the WD repeat EDC4 family. As to quaternary structure, part of a decapping complex consisting of DCP1A, DCP2, EDC3, EDC4 and probably DDX6. Part of a complex consisting of DCP1A, EDC3, EDC4 and DDX6. Part of a complex consisting of DCP1B, EDC3, EDC4 and DDX6. Interacts with DCP2. Interacts with NBDY. Interacts with Tex19.1. Interacts with LSM14A. Interacts with DDX6.

The protein localises to the cytoplasm. Its subcellular location is the P-body. It localises to the nucleus. Functionally, in the process of mRNA degradation, seems to play a role in mRNA decapping. Component of a complex containing DCP2 and DCP1A which functions in decapping of ARE-containing mRNAs. Promotes complex formation between DCP1A and DCP2. Enhances the catalytic activity of DCP2 (in vitro). The chain is Enhancer of mRNA-decapping protein 4 (Edc4) from Rattus norvegicus (Rat).